The following is a 478-amino-acid chain: Protein nucleotidyltransferase YdiU (478 aa).

Residues glycine 74, glycine 76, arginine 77, lysine 97, aspartate 109, glycine 110, arginine 160, and arginine 167 each contribute to the ATP site. The Proton acceptor role is filled by aspartate 236. Mg(2+)-binding residues include asparagine 237 and aspartate 246. Aspartate 246 is a binding site for ATP.

The protein belongs to the SELO family. It depends on Mg(2+) as a cofactor. Mn(2+) serves as cofactor.

The catalysed reaction is L-seryl-[protein] + ATP = 3-O-(5'-adenylyl)-L-seryl-[protein] + diphosphate. It carries out the reaction L-threonyl-[protein] + ATP = 3-O-(5'-adenylyl)-L-threonyl-[protein] + diphosphate. It catalyses the reaction L-tyrosyl-[protein] + ATP = O-(5'-adenylyl)-L-tyrosyl-[protein] + diphosphate. The enzyme catalyses L-histidyl-[protein] + UTP = N(tele)-(5'-uridylyl)-L-histidyl-[protein] + diphosphate. The catalysed reaction is L-seryl-[protein] + UTP = O-(5'-uridylyl)-L-seryl-[protein] + diphosphate. It carries out the reaction L-tyrosyl-[protein] + UTP = O-(5'-uridylyl)-L-tyrosyl-[protein] + diphosphate. Its function is as follows. Nucleotidyltransferase involved in the post-translational modification of proteins. It can catalyze the addition of adenosine monophosphate (AMP) or uridine monophosphate (UMP) to a protein, resulting in modifications known as AMPylation and UMPylation. The polypeptide is Protein nucleotidyltransferase YdiU (Chromobacterium violaceum (strain ATCC 12472 / DSM 30191 / JCM 1249 / CCUG 213 / NBRC 12614 / NCIMB 9131 / NCTC 9757 / MK)).